A 673-amino-acid chain; its full sequence is DNA ligase (673 aa).

NAD(+) is bound by residues 32–36, 81–82, and Glu111; these read DHVYD and SL. Lys113 acts as the N6-AMP-lysine intermediate in catalysis. Residues Arg134, Glu171, Lys286, and Lys310 each contribute to the NAD(+) site. Cys404, Cys407, Cys422, and Cys428 together coordinate Zn(2+). One can recognise a BRCT domain in the interval 595 to 673; sequence NIIDEYKNKT…NEFWKKDNNF (79 aa).

This sequence belongs to the NAD-dependent DNA ligase family. LigA subfamily. Mg(2+) is required as a cofactor. The cofactor is Mn(2+).

The catalysed reaction is NAD(+) + (deoxyribonucleotide)n-3'-hydroxyl + 5'-phospho-(deoxyribonucleotide)m = (deoxyribonucleotide)n+m + AMP + beta-nicotinamide D-nucleotide.. DNA ligase that catalyzes the formation of phosphodiester linkages between 5'-phosphoryl and 3'-hydroxyl groups in double-stranded DNA using NAD as a coenzyme and as the energy source for the reaction. It is essential for DNA replication and repair of damaged DNA. The protein is DNA ligase of Ureaplasma urealyticum serovar 10 (strain ATCC 33699 / Western).